Reading from the N-terminus, the 934-residue chain is UPF0182 protein sync_1321 (934 aa).

9 consecutive transmembrane segments (helical) span residues 2 to 22, 45 to 65, 86 to 106, 129 to 149, 165 to 185, 208 to 228, 251 to 271, 300 to 320, and 327 to 347; these read AKII…IVII, LLLQ…CALW, GYRY…VLAI, FSTG…IMFG, VCIC…FSIP, IAFG…TALW, HGLR…MWLS, LGSI…FSSV, and LILA…FPLM.

This sequence belongs to the UPF0182 family.

It localises to the cell membrane. The sequence is that of UPF0182 protein sync_1321 from Synechococcus sp. (strain CC9311).